A 449-amino-acid polypeptide reads, in one-letter code: Heterogeneous nuclear ribonucleoprotein H (449 aa).

Position 1 is an N-acetylmethionine (methionine 1). An N-acetylmethionine; in Heterogeneous nuclear ribonucleoprotein H, N-terminally processed modification is found at methionine 2. An RRM 1 domain is found at 11–90 (FVVKVRGLPW…RYVEVFKSNN (80 aa)). Serine 23 is subject to Phosphoserine. Lysine 35 is covalently cross-linked (Glycyl lysine isopeptide (Lys-Gly) (interchain with G-Cter in SUMO2)). 2 positions are modified to phosphoserine: serine 54 and serine 63. Glycyl lysine isopeptide (Lys-Gly) (interchain with G-Cter in SUMO2) cross-links involve residues lysine 87 and lysine 98. One can recognise an RRM 2 domain in the interval 111-188 (GFVRLRGLPF…RYIEIFKSSR (78 aa)). Position 233 is a dimethylated arginine; alternate (arginine 233). An Omega-N-methylarginine; alternate modification is found at arginine 233. A 1-1 repeat occupies 234-249 (GAYGGGYGGYDDYNGY). The segment at 234 to 433 (GAYGGGYGGY…YGGQSSMSGY (200 aa)) is 2 X 16 AA Gly-rich approximate repeats. Residue tyrosine 246 is modified to Phosphotyrosine. In terms of domain architecture, RRM 3 spans 289 to 364 (HCVHMRGLPY…RYVELFLNST (76 aa)). Serine 310 bears the Phosphoserine mark. 3 repeat units span residues 354–372 (HRYV…GGAY), 374–392 (HRYV…GGAY), and 418–433 (GGYG…MSGY). Positions 354–392 (HRYVELFLNSTAGASGGAYEHRYVELFLNSTAGASGGAY) are 2 X 19 AA perfect repeats.

Part of a ternary complex containing FUBP2, PTBP1, PTBP2 and HNRNPH1. Identified in the spliceosome C complex. Interacts with IGF2BP1. Interacts with CUGBP1; the interaction is RNA-dependent. Interacts with MBNL1; the interaction in RNA-independent.

Its subcellular location is the nucleus. It is found in the nucleoplasm. In terms of biological role, this protein is a component of the heterogeneous nuclear ribonucleoprotein (hnRNP) complexes which provide the substrate for the processing events that pre-mRNAs undergo before becoming functional, translatable mRNAs in the cytoplasm. Mediates pre-mRNA alternative splicing regulation. Inhibits, together with CUGBP1, insulin receptor (IR) pre-mRNA exon 11 inclusion in myoblast. Binds to the IR RNA. Binds poly(RG). The protein is Heterogeneous nuclear ribonucleoprotein H (Hnrnph1) of Mus musculus (Mouse).